We begin with the raw amino-acid sequence, 292 residues long: ATP synthase gamma chain (292 aa).

This sequence belongs to the ATPase gamma chain family. In terms of assembly, F-type ATPases have 2 components, CF(1) - the catalytic core - and CF(0) - the membrane proton channel. CF(1) has five subunits: alpha(3), beta(3), gamma(1), delta(1), epsilon(1). CF(0) has three main subunits: a, b and c.

The protein resides in the cell membrane. In terms of biological role, produces ATP from ADP in the presence of a proton gradient across the membrane. The gamma chain is believed to be important in regulating ATPase activity and the flow of protons through the CF(0) complex. This Streptococcus thermophilus (strain CNRZ 1066) protein is ATP synthase gamma chain.